The following is a 388-amino-acid chain: Succinate--CoA ligase [ADP-forming] subunit beta (388 aa).

The ATP-grasp domain maps to 9–244; sequence KQIFAQYGLP…PSQEDAREAA (236 aa). ATP-binding positions include Lys46, 53–55, Glu99, Ala102, and Glu107; that span reads GRG. 2 residues coordinate Mg(2+): Asn199 and Asp213. Residues Asn264 and 321-323 each bind substrate; that span reads GIV.

The protein belongs to the succinate/malate CoA ligase beta subunit family. Heterotetramer of two alpha and two beta subunits. Mg(2+) serves as cofactor.

It catalyses the reaction succinate + ATP + CoA = succinyl-CoA + ADP + phosphate. The enzyme catalyses GTP + succinate + CoA = succinyl-CoA + GDP + phosphate. Its pathway is carbohydrate metabolism; tricarboxylic acid cycle; succinate from succinyl-CoA (ligase route): step 1/1. Its function is as follows. Succinyl-CoA synthetase functions in the citric acid cycle (TCA), coupling the hydrolysis of succinyl-CoA to the synthesis of either ATP or GTP and thus represents the only step of substrate-level phosphorylation in the TCA. The beta subunit provides nucleotide specificity of the enzyme and binds the substrate succinate, while the binding sites for coenzyme A and phosphate are found in the alpha subunit. The chain is Succinate--CoA ligase [ADP-forming] subunit beta from Mannheimia succiniciproducens (strain KCTC 0769BP / MBEL55E).